A 78-amino-acid chain; its full sequence is RNA-binding protein Hfq (78 aa).

In terms of domain architecture, Sm spans 10 to 69 (DPFLNALRKEHVPVSIYLVNGIKLQGNIESFDQYVVLLRNTVTQMVYKHAISTVVPARPV).

It belongs to the Hfq family. In terms of assembly, homohexamer.

Its function is as follows. RNA chaperone that binds small regulatory RNA (sRNAs) and mRNAs to facilitate mRNA translational regulation in response to envelope stress, environmental stress and changes in metabolite concentrations. Also binds with high specificity to tRNAs. This Paraburkholderia phytofirmans (strain DSM 17436 / LMG 22146 / PsJN) (Burkholderia phytofirmans) protein is RNA-binding protein Hfq.